A 226-amino-acid chain; its full sequence is 2-C-methyl-D-erythritol 4-phosphate cytidylyltransferase (226 aa).

Belongs to the IspD/TarI cytidylyltransferase family. IspD subfamily.

It catalyses the reaction 2-C-methyl-D-erythritol 4-phosphate + CTP + H(+) = 4-CDP-2-C-methyl-D-erythritol + diphosphate. It functions in the pathway isoprenoid biosynthesis; isopentenyl diphosphate biosynthesis via DXP pathway; isopentenyl diphosphate from 1-deoxy-D-xylulose 5-phosphate: step 2/6. Catalyzes the formation of 4-diphosphocytidyl-2-C-methyl-D-erythritol from CTP and 2-C-methyl-D-erythritol 4-phosphate (MEP). This is 2-C-methyl-D-erythritol 4-phosphate cytidylyltransferase from Bacillus cereus (strain ATCC 14579 / DSM 31 / CCUG 7414 / JCM 2152 / NBRC 15305 / NCIMB 9373 / NCTC 2599 / NRRL B-3711).